The sequence spans 117 residues: Large ribosomal subunit protein uL18 (117 aa).

It belongs to the universal ribosomal protein uL18 family. Part of the 50S ribosomal subunit; part of the 5S rRNA/L5/L18/L25 subcomplex. Contacts the 5S and 23S rRNAs.

This is one of the proteins that bind and probably mediate the attachment of the 5S RNA into the large ribosomal subunit, where it forms part of the central protuberance. This chain is Large ribosomal subunit protein uL18, found in Blochmanniella pennsylvanica (strain BPEN).